The primary structure comprises 296 residues: Phosphatidylglycerol--prolipoprotein diacylglyceryl transferase (296 aa).

Helical transmembrane passes span 17–37 (LAVRWYGLMYLVGFILAIVVG), 59–79 (MMFYGVLGVVLGGRLGYVLFY), and 97–117 (GGMSFHGGFLGVTLAMALFAW). R142 is an a 1,2-diacyl-sn-glycero-3-phospho-(1'-sn-glycerol) binding site. Helical transmembrane passes span 230-250 (MGAISALFLIGYGAARFTVEF) and 265-285 (LSMGQWLSLPMIVAGVLMMIW).

The protein belongs to the Lgt family.

The protein resides in the cell inner membrane. The catalysed reaction is L-cysteinyl-[prolipoprotein] + a 1,2-diacyl-sn-glycero-3-phospho-(1'-sn-glycerol) = an S-1,2-diacyl-sn-glyceryl-L-cysteinyl-[prolipoprotein] + sn-glycerol 1-phosphate + H(+). The protein operates within protein modification; lipoprotein biosynthesis (diacylglyceryl transfer). Its function is as follows. Catalyzes the transfer of the diacylglyceryl group from phosphatidylglycerol to the sulfhydryl group of the N-terminal cysteine of a prolipoprotein, the first step in the formation of mature lipoproteins. The chain is Phosphatidylglycerol--prolipoprotein diacylglyceryl transferase from Burkholderia thailandensis (strain ATCC 700388 / DSM 13276 / CCUG 48851 / CIP 106301 / E264).